The following is a 28-amino-acid chain: Glutathione S-transferase 5 (28 aa).

Positions 1–28 constitute a GST N-terminal domain; that stretch reads PNYKLTYFNLRGRAEISRYLFAYAGIKY. Position 7 (Y7) interacts with glutathione.

This sequence belongs to the GST superfamily. Sigma family. As to quaternary structure, homodimer.

It localises to the cytoplasm. It catalyses the reaction RX + glutathione = an S-substituted glutathione + a halide anion + H(+). Its function is as follows. Conjugation of reduced glutathione to a wide number of exogenous and endogenous hydrophobic electrophiles. The chain is Glutathione S-transferase 5 from Gallus gallus (Chicken).